Consider the following 242-residue polypeptide: N-glycosylase/DNA lyase (242 aa).

Gln-26, Ser-53, and Trp-64 together coordinate 8-oxoguanine. Positions 120–184 are helix-hairpin-helix; sequence EGYYKNMKML…EDLRIKSVTS (65 aa). Lys-144 serves as the catalytic Schiff-base intermediate with DNA. Phe-148 and Pro-174 together coordinate 8-oxoguanine. The active site involves Asp-176. 2 residues coordinate 8-oxoguanine: Asp-210 and Trp-214.

Belongs to the archaeal N-glycosylase/DNA lyase (AGOG) family.

The enzyme catalyses 2'-deoxyribonucleotide-(2'-deoxyribose 5'-phosphate)-2'-deoxyribonucleotide-DNA = a 3'-end 2'-deoxyribonucleotide-(2,3-dehydro-2,3-deoxyribose 5'-phosphate)-DNA + a 5'-end 5'-phospho-2'-deoxyribonucleoside-DNA + H(+). Functionally, DNA repair enzyme that is part of the base excision repair (BER) pathway; protects from oxidative damage by removing the major product of DNA oxidation, 8-oxoguanine (GO), from single- and double-stranded DNA substrates. This chain is N-glycosylase/DNA lyase, found in Pyrococcus furiosus (strain ATCC 43587 / DSM 3638 / JCM 8422 / Vc1).